Reading from the N-terminus, the 505-residue chain is ATP synthase subunit alpha (505 aa).

An ATP-binding site is contributed by 170–177 (GDRQTGKT).

Belongs to the ATPase alpha/beta chains family. F-type ATPases have 2 components, CF(1) - the catalytic core - and CF(0) - the membrane proton channel. CF(1) has five subunits: alpha(3), beta(3), gamma(1), delta(1), epsilon(1). CF(0) has four main subunits: a(1), b(1), b'(1) and c(9-12).

Its subcellular location is the cellular thylakoid membrane. The catalysed reaction is ATP + H2O + 4 H(+)(in) = ADP + phosphate + 5 H(+)(out). In terms of biological role, produces ATP from ADP in the presence of a proton gradient across the membrane. The alpha chain is a regulatory subunit. This Prochlorococcus marinus (strain SARG / CCMP1375 / SS120) protein is ATP synthase subunit alpha.